A 504-amino-acid chain; its full sequence is Lysine--tRNA ligase (504 aa).

Positions 404 and 411 each coordinate Mg(2+).

The protein belongs to the class-II aminoacyl-tRNA synthetase family. In terms of assembly, homodimer. Requires Mg(2+) as cofactor.

Its subcellular location is the cytoplasm. It catalyses the reaction tRNA(Lys) + L-lysine + ATP = L-lysyl-tRNA(Lys) + AMP + diphosphate. The protein is Lysine--tRNA ligase of Aliarcobacter butzleri (strain RM4018) (Arcobacter butzleri).